Reading from the N-terminus, the 230-residue chain is Thymidylate kinase (230 aa).

20–27 (GGEGAGKS) lines the ATP pocket.

It belongs to the thymidylate kinase family.

The enzyme catalyses dTMP + ATP = dTDP + ADP. Phosphorylation of dTMP to form dTDP in both de novo and salvage pathways of dTTP synthesis. This chain is Thymidylate kinase, found in Rhodopseudomonas palustris (strain TIE-1).